A 241-amino-acid polypeptide reads, in one-letter code: Proteasome subunit beta type-1 (241 aa).

N-acetylmethionine is present on Met1. Residues 1–28 (MLSSVAAYSGAGRDLAMEPHSSVGPLQL) constitute a propeptide that is removed on maturation. O-linked (GlcNAc) serine glycosylation occurs at Ser58. Residues Ser62 and Ser68 each carry the phosphoserine modification. Tyr150 carries the phosphotyrosine modification. Ser162 bears the Phosphoserine mark. Lys204 is modified (N6-acetyllysine). O-linked (GlcNAc) serine glycosylation is present at Ser209.

It belongs to the peptidase T1B family. The 26S proteasome consists of a 20S proteasome core and two 19S regulatory subunits. The 20S proteasome core is a barrel-shaped complex made of 28 subunits that are arranged in four stacked rings. The two outer rings are each formed by seven alpha subunits, and the two inner rings are formed by seven beta subunits. The proteolytic activity is exerted by three beta-subunits PSMB5, PSMB6 and PSMB7. Interacts with SERPINB2. Interacts with RFPL4A.

It is found in the cytoplasm. The protein resides in the nucleus. Functionally, non-catalytic component of the 20S core proteasome complex involved in the proteolytic degradation of most intracellular proteins. This complex plays numerous essential roles within the cell by associating with different regulatory particles. Associated with two 19S regulatory particles, forms the 26S proteasome and thus participates in the ATP-dependent degradation of ubiquitinated proteins. The 26S proteasome plays a key role in the maintenance of protein homeostasis by removing misfolded or damaged proteins that could impair cellular functions, and by removing proteins whose functions are no longer required. Associated with the PA200 or PA28, the 20S proteasome mediates ubiquitin-independent protein degradation. This type of proteolysis is required in several pathways including spermatogenesis (20S-PA200 complex) or generation of a subset of MHC class I-presented antigenic peptides (20S-PA28 complex). This chain is Proteasome subunit beta type-1 (PSMB1), found in Bos taurus (Bovine).